Consider the following 491-residue polypeptide: Serine/threonine-protein kinase 33 (491 aa).

A disordered region spans residues 51-89 (FASQERKKERNTSRESSLKDLSIRTSNVERKPQAQWSRS). Over residues 54–82 (QERKKERNTSRESSLKDLSIRTSNVERKP) the composition is skewed to basic and acidic residues. A Protein kinase domain is found at 111-377 (YTFGRILGQG…AKELLDNQWL (267 aa)). Residues 117 to 125 (LGQGSFGMV) and K140 each bind ATP. Catalysis depends on D233, which acts as the Proton acceptor. The tract at residues 398 to 491 (KNNPESDEET…TTLFRGKKRL (94 aa)) is disordered. Residues 402–414 (ESDEETNTDEETE) show a composition bias toward acidic residues. S403 carries the phosphoserine modification. A compositionally biased stretch (polar residues) spans 415 to 431 (QSAVYSPSANTAKQPTN). A compositionally biased stretch (low complexity) spans 445-457 (SSNSSSSKLLSAE). Positions 475–484 (AKTTLKSTTL) are enriched in polar residues.

Belongs to the protein kinase superfamily. CAMK Ser/Thr protein kinase family. CaMK subfamily. As to quaternary structure, homodimer. In terms of processing, autophosphorylated. Highly expressed in testis, particularly in cells from the spermatogenic epithelia. Present in meiotic and post meiotic sperm cells. Significant expression is detected in lung epithelia, alveolar macrophages, horizontal cells in the retina and in embryonic organs such as heart, brain and spinal cord. Also expressed in pituitary gland, kidney, pancreas, trachea and thyroid gland.

It is found in the cytoplasm. It localises to the cytoskeleton. The protein resides in the perinuclear region. It catalyses the reaction L-seryl-[protein] + ATP = O-phospho-L-seryl-[protein] + ADP + H(+). The catalysed reaction is L-threonyl-[protein] + ATP = O-phospho-L-threonyl-[protein] + ADP + H(+). Specifically inhibited by CDD-2807 ((3-([1,1'-Biphenyl]-2-ylethynyl)-1H-indazol-5-yl)(2,6-diazaspiro[3.5]nonan-2-yl)methanone). CDD-2807 is a potential male contraceptive drug: it is not toxic, efficiently crosses the blood-testis barrier and induces a reversible contraceptive effect in male mice. Its function is as follows. Serine/threonine protein kinase required for spermatid differentiation and male fertility. Promotes sperm flagella assembly during spermatogenesis by mediating phosphorylation of fibrous sheath proteins AKAP3 and AKAP4. Also phosphorylates vimentin/VIM, thereby regulating the dynamic behavior of the intermediate filament cytoskeleton. This chain is Serine/threonine-protein kinase 33, found in Mus musculus (Mouse).